The chain runs to 98 residues: Parvalbumin beta 1 (98 aa).

N-acetylserine is present on Ser-1. EF-hand domains follow at residues 32-67 (KIGL…FSAG) and 67-98 (GARA…MIKG). Residues Asp-45, Asp-47, Ser-49, Phe-51, Glu-53, Glu-56, Asp-80, Asp-82, Asp-84, Lys-86, and Glu-91 each coordinate Ca(2+).

This sequence belongs to the parvalbumin family.

Its function is as follows. In muscle, parvalbumin is thought to be involved in relaxation after contraction. It binds two calcium ions. This Macruronus magellanicus (Patagonian grenadier) protein is Parvalbumin beta 1.